The primary structure comprises 1123 residues: Leucine--tRNA ligase, cytoplasmic (1123 aa).

The short motif at 84-94 (PYMNGRLHAGH) is the 'HIGH' region element. The 'KMSKS' region motif lies at 757-761 (KMSKS). An ATP-binding site is contributed by Lys760.

It belongs to the class-I aminoacyl-tRNA synthetase family.

The protein localises to the cytoplasm. The enzyme catalyses tRNA(Leu) + L-leucine + ATP = L-leucyl-tRNA(Leu) + AMP + diphosphate. This chain is Leucine--tRNA ligase, cytoplasmic (leu-6), found in Neurospora crassa (strain ATCC 24698 / 74-OR23-1A / CBS 708.71 / DSM 1257 / FGSC 987).